The following is a 1220-amino-acid chain: ATP-dependent helicase/deoxyribonuclease subunit B (1220 aa).

In terms of domain architecture, UvrD-like helicase ATP-binding spans 1-281 (MSMRFIVGRA…VFLTETHRFE (281 aa)). Position 8–15 (8–15 (GRAGTGKS)) interacts with ATP. The region spanning 283 to 590 (AGLKHLERFY…LVGSLDRSRN (308 aa)) is the UvrD-like helicase C-terminal domain. Residue Cys788 participates in [4Fe-4S] cluster binding. The tract at residues 989 to 1008 (LAEGSKGSEGSEGSEDSEDS) is disordered. Residues Cys1128, Cys1131, and Cys1137 each contribute to the [4Fe-4S] cluster site. Residues 1162 to 1171 (RVQSQDSEQY) are compositionally biased toward polar residues. Residues 1162–1220 (RVQSQDSEQYPEQHPPTSVPGETSRRALQKDGGNSPRGQELIWLGEDEAGAGKEDDGHE) are disordered. Residues 1211 to 1220 (GAGKEDDGHE) show a composition bias toward basic and acidic residues.

It belongs to the helicase family. AddB/RexB type 1 subfamily. In terms of assembly, heterodimer of AddA and AddB. It depends on Mg(2+) as a cofactor. [4Fe-4S] cluster serves as cofactor.

The heterodimer acts as both an ATP-dependent DNA helicase and an ATP-dependent, dual-direction single-stranded exonuclease. Recognizes the chi site generating a DNA molecule suitable for the initiation of homologous recombination. The AddB subunit has 5' -&gt; 3' nuclease activity but not helicase activity. This chain is ATP-dependent helicase/deoxyribonuclease subunit B, found in Desulfitobacterium hafniense (strain Y51).